A 325-amino-acid chain; its full sequence is Methionyl-tRNA formyltransferase (325 aa).

113–116 contacts (6S)-5,6,7,8-tetrahydrofolate; that stretch reads SLLP.

It belongs to the Fmt family.

The enzyme catalyses L-methionyl-tRNA(fMet) + (6R)-10-formyltetrahydrofolate = N-formyl-L-methionyl-tRNA(fMet) + (6S)-5,6,7,8-tetrahydrofolate + H(+). In terms of biological role, attaches a formyl group to the free amino group of methionyl-tRNA(fMet). The formyl group appears to play a dual role in the initiator identity of N-formylmethionyl-tRNA by promoting its recognition by IF2 and preventing the misappropriation of this tRNA by the elongation apparatus. The sequence is that of Methionyl-tRNA formyltransferase from Chromohalobacter salexigens (strain ATCC BAA-138 / DSM 3043 / CIP 106854 / NCIMB 13768 / 1H11).